We begin with the raw amino-acid sequence, 258 residues long: Ferredoxin--NADP reductase (258 aa).

Positions 2 to 102 constitute an FAD-binding FR-type domain; the sequence is SNLNVERVLS…RKPTGTLVTS (101 aa). Aspartate 17 provides a ligand contact to NADP(+). FAD contacts are provided by residues 51–54, 67–69, 74–77, and threonine 117; these read RAYS, FSI, and GPLT. Residues 144–145, 181–182, and arginine 190 each bind NADP(+); these read VR and TR. 254–258 contacts FAD; the sequence is AFVEK.

It belongs to the ferredoxin--NADP reductase type 1 family. In terms of assembly, monomer. Requires FAD as cofactor.

It catalyses the reaction 2 reduced [2Fe-2S]-[ferredoxin] + NADP(+) + H(+) = 2 oxidized [2Fe-2S]-[ferredoxin] + NADPH. Functionally, transports electrons between ferredoxin and NADPH. The sequence is that of Ferredoxin--NADP reductase from Azotobacter vinelandii.